The chain runs to 236 residues: uncharacterized protein (236 aa).

The N-terminal stretch at 1–22 is a signal peptide; that stretch reads MEFKMQKIILGMLVVTASNAMA.

This is an uncharacterized protein from Pasteurella multocida (strain Pm70).